A 299-amino-acid polypeptide reads, in one-letter code: ATP phosphoribosyltransferase (299 aa).

The protein belongs to the ATP phosphoribosyltransferase family. Long subfamily. In terms of assembly, equilibrium between an active dimeric form, an inactive hexameric form and higher aggregates. Interconversion between the various forms is largely reversible and is influenced by the natural substrates and inhibitors of the enzyme. Mg(2+) is required as a cofactor.

It localises to the cytoplasm. The enzyme catalyses 1-(5-phospho-beta-D-ribosyl)-ATP + diphosphate = 5-phospho-alpha-D-ribose 1-diphosphate + ATP. It participates in amino-acid biosynthesis; L-histidine biosynthesis; L-histidine from 5-phospho-alpha-D-ribose 1-diphosphate: step 1/9. With respect to regulation, feedback inhibited by histidine. Its function is as follows. Catalyzes the condensation of ATP and 5-phosphoribose 1-diphosphate to form N'-(5'-phosphoribosyl)-ATP (PR-ATP). Has a crucial role in the pathway because the rate of histidine biosynthesis seems to be controlled primarily by regulation of HisG enzymatic activity. This is ATP phosphoribosyltransferase from Salmonella agona (strain SL483).